The sequence spans 330 residues: Probable UDP-3-O-acylglucosamine N-acyltransferase 1, mitochondrial (330 aa).

The transit peptide at 1–52 (MANSLRTLFSVSTHGVFLNKRSSYRVRKVFVGMPLRICSEIPRFVSVSCIRS) directs the protein to the mitochondrion. 160–162 (FGF) is a binding site for UDP-N-acetyl-alpha-D-glucosamine. 2 residues coordinate hexadecanoate: D210 and Q214. Residue H217 is the Proton acceptor of the active site. Positions 218, 236, and 254 each coordinate UDP-N-acetyl-alpha-D-glucosamine.

The protein belongs to the transferase hexapeptide repeat family. LpxD subfamily. Homotrimer.

It localises to the mitochondrion. It carries out the reaction a UDP-3-O-[(3R)-3-hydroxyacyl]-alpha-D-glucosamine + a (3R)-hydroxyacyl-[ACP] = a UDP-2-N,3-O-bis[(3R)-3-hydroxyacyl]-alpha-D-glucosamine + holo-[ACP] + H(+). Its pathway is glycolipid biosynthesis; lipid IV(A) biosynthesis; lipid IV(A) from (3R)-3-hydroxytetradecanoyl-[acyl-carrier-protein] and UDP-N-acetyl-alpha-D-glucosamine: step 3/6. Involved in the biosynthesis of lipid A, a phosphorylated glycolipid that in bacteria anchors the lipopolysaccharide to the outer membrane of the cell. Lipid A-like molecules in plants may serve as structural components of the outer membranes of mitochondria and/or chloroplasts, or may be involved in signal transduction or plant defense responses. This is Probable UDP-3-O-acylglucosamine N-acyltransferase 1, mitochondrial (LPXD1) from Arabidopsis thaliana (Mouse-ear cress).